Consider the following 490-residue polypeptide: Betaine aldehyde dehydrogenase (490 aa).

Residues threonine 26, isoleucine 27, and aspartate 93 each contribute to the K(+) site. Glycine 150 to tryptophan 152 contributes to the NAD(+) binding site. Lysine 162 acts as the Charge relay system in catalysis. Lysine 176 to glutamate 179 contributes to the NAD(+) binding site. Valine 180 is a K(+) binding site. Glycine 230–serine 233 lines the NAD(+) pocket. Leucine 246 contacts K(+). The active-site Proton acceptor is glutamate 252. Glycine 254, cysteine 286, and glutamate 387 together coordinate NAD(+). The Nucleophile role is filled by cysteine 286. At cysteine 286 the chain carries Cysteine sulfenic acid (-SOH). 2 residues coordinate K(+): lysine 457 and glycine 460. The Charge relay system role is filled by glutamate 464.

This sequence belongs to the aldehyde dehydrogenase family. Dimer of dimers. It depends on K(+) as a cofactor.

It carries out the reaction betaine aldehyde + NAD(+) + H2O = glycine betaine + NADH + 2 H(+). It functions in the pathway amine and polyamine biosynthesis; betaine biosynthesis via choline pathway; betaine from betaine aldehyde: step 1/1. Involved in the biosynthesis of the osmoprotectant glycine betaine. Catalyzes the irreversible oxidation of betaine aldehyde to the corresponding acid. The chain is Betaine aldehyde dehydrogenase from Klebsiella pneumoniae (strain 342).